A 549-amino-acid polypeptide reads, in one-letter code: Oxygen-dependent choline dehydrogenase (549 aa).

4-33 (DFVIIGSGSAGSAMAYRLSEDGRYSVIVIE) lines the FAD pocket. The active-site Proton acceptor is histidine 465.

The protein belongs to the GMC oxidoreductase family. It depends on FAD as a cofactor.

The catalysed reaction is choline + A = betaine aldehyde + AH2. It carries out the reaction betaine aldehyde + NAD(+) + H2O = glycine betaine + NADH + 2 H(+). It functions in the pathway amine and polyamine biosynthesis; betaine biosynthesis via choline pathway; betaine aldehyde from choline (cytochrome c reductase route): step 1/1. Functionally, involved in the biosynthesis of the osmoprotectant glycine betaine. Catalyzes the oxidation of choline to betaine aldehyde and betaine aldehyde to glycine betaine at the same rate. This is Oxygen-dependent choline dehydrogenase from Brucella melitensis biotype 1 (strain ATCC 23456 / CCUG 17765 / NCTC 10094 / 16M).